Here is a 1317-residue protein sequence, read N- to C-terminus: Kinesin-like protein KIF16B (1317 aa).

The Kinesin motor domain maps to 3 to 358 (SVKVAVRVRP…LRYANRAKNI (356 aa)). Position 102–109 (102–109 (GQTGSGKS)) interacts with ATP. Residues 370-425 (VKLIRELRAEIARLKTLLAQGNQIALLDSPTALSMEEKLQQNEARVQELTKEWTNK) adopt a coiled-coil conformation. S398 carries the phosphoserine modification. In terms of domain architecture, FHA spans 478 to 529 (TYVGRDDASTEQDIVLHGLDLESEHCIFENIGGTVTLIPLSGSQCSVNGVQI). The residue at position 577 (T577) is a Phosphothreonine. At S582 the chain carries Phosphoserine. Coiled-coil stretches lie at residues 595–882 (GLEF…DESV) and 936–1087 (LSLD…VQKD). Positions 1036 to 1048 (LASLNSGSREQSG) are enriched in polar residues. The interval 1036–1057 (LASLNSGSREQSGLQASLEAEQ) is disordered. Position 1052 is a phosphoserine (S1052). A PX domain is found at 1182-1296 (DPIKISIPRY…KVGLTLSKHT (115 aa)).

Belongs to the TRAFAC class myosin-kinesin ATPase superfamily. Kinesin family. In terms of assembly, interacts with RAB14. Interacts with PTPN21. Primarily expressed in brain. Also present in kidney, liver, intestine, placenta, leukocytes, heart and skeletal muscle (at protein level).

The protein localises to the cytoplasm. Its subcellular location is the cytoskeleton. It localises to the early endosome membrane. The protein resides in the spindle. Functionally, plus end-directed microtubule-dependent motor protein involved in endosome transport and receptor recycling and degradation. Regulates the plus end motility of early endosomes and the balance between recycling and degradation of receptors such as EGF receptor (EGFR) and FGF receptor (FGFR). Regulates the Golgi to endosome transport of FGFR-containing vesicles during early development, a key process for developing basement membrane and epiblast and primitive endoderm lineages during early postimplantation development. This is Kinesin-like protein KIF16B (KIF16B) from Homo sapiens (Human).